Reading from the N-terminus, the 540-residue chain is Glucose-6-phosphate isomerase (540 aa).

Residue E346 is the Proton donor of the active site. Residues H377 and K505 contribute to the active site.

This sequence belongs to the GPI family.

The protein localises to the cytoplasm. The enzyme catalyses alpha-D-glucose 6-phosphate = beta-D-fructose 6-phosphate. Its pathway is carbohydrate biosynthesis; gluconeogenesis. The protein operates within carbohydrate degradation; glycolysis; D-glyceraldehyde 3-phosphate and glycerone phosphate from D-glucose: step 2/4. In terms of biological role, catalyzes the reversible isomerization of glucose-6-phosphate to fructose-6-phosphate. In Francisella tularensis subsp. mediasiatica (strain FSC147), this protein is Glucose-6-phosphate isomerase.